The chain runs to 691 residues: Ubiquitin-like domain-containing protein CIP73 (691 aa).

Residues 22-97 (IEIKIKMLDS…LHLVARHPDL (76 aa)) enclose the Ubiquitin-like domain. Disordered stretches follow at residues 92–118 (ARHP…TGHG), 176–203 (TGLG…ISSD), 264–283 (RNEE…EGLS), 432–473 (ASTT…ASIA), 499–554 (SVNT…SSRV), 590–624 (EIHV…EPNV), and 645–691 (HIGR…QKME). 5 stretches are compositionally biased toward polar residues: residues 104-118 (PNHS…TGHG), 178-189 (LGRTSDFTGNPS), 273-283 (SRLSSTPEGLS), 446-465 (TQSA…QTTS), and 499-523 (SVNT…STAE). Basic and acidic residues predominate over residues 525-535 (TLHRQSMEDSA). The span at 536-554 (RNGTLPTPNTQQEPSSSRV) shows a compositional bias: polar residues. The span at 597–617 (SSQGTTAGVTSAATSSGAAQA) shows a compositional bias: low complexity.

As to quaternary structure, interacts with CCAMK. Post-translationally, phosphorylated at the N-terminus by CCAMK. Highly epressed in roots. Expressed at very low levels in leaves and stems.

Its subcellular location is the nucleus. In terms of biological role, involved in root nodulation. Required for root nodule organogenesis after infection by symbiotic rhizobia. Probably not involved in arbuscular mycorrhizal (AM) symbiosis. Acts downstream of CCAMK. This is Ubiquitin-like domain-containing protein CIP73 from Lotus japonicus (Lotus corniculatus var. japonicus).